A 277-amino-acid chain; its full sequence is Large ribosomal subunit protein uL2 (277 aa).

Positions aspartate 199–serine 277 are disordered.

Belongs to the universal ribosomal protein uL2 family. Part of the 50S ribosomal subunit. Forms a bridge to the 30S subunit in the 70S ribosome.

Functionally, one of the primary rRNA binding proteins. Required for association of the 30S and 50S subunits to form the 70S ribosome, for tRNA binding and peptide bond formation. It has been suggested to have peptidyltransferase activity; this is somewhat controversial. Makes several contacts with the 16S rRNA in the 70S ribosome. The sequence is that of Large ribosomal subunit protein uL2 from Mesorhizobium japonicum (strain LMG 29417 / CECT 9101 / MAFF 303099) (Mesorhizobium loti (strain MAFF 303099)).